A 303-amino-acid chain; its full sequence is 1-acyl-sn-glycerol-3-phosphate acyltransferase (303 aa).

An HXXXXD motif motif is present at residues 82–87 (HQSTLD). A disordered region spans residues 278-303 (NEPVPSVSISNDVNTHNEGSSVKKMH). A compositionally biased stretch (polar residues) spans 284-297 (VSISNDVNTHNEGS).

The protein belongs to the 1-acyl-sn-glycerol-3-phosphate acyltransferase family.

The protein localises to the lipid droplet. It catalyses the reaction a 1-acyl-sn-glycero-3-phosphate + an acyl-CoA = a 1,2-diacyl-sn-glycero-3-phosphate + CoA. The enzyme catalyses a 1-acyl-sn-glycero-3-phosphocholine + an acyl-CoA = a 1,2-diacyl-sn-glycero-3-phosphocholine + CoA. The catalysed reaction is a 1-acyl-sn-glycero-3-phosphoethanolamine + an acyl-CoA = a 1,2-diacyl-sn-glycero-3-phosphoethanolamine + CoA. It carries out the reaction 1-hexadecanoyl-sn-glycero-3-phosphate + (9Z)-octadecenoyl-CoA = 1-hexadecanoyl-2-(9Z-octadecenoyl)-sn-glycero-3-phosphate + CoA. It catalyses the reaction 1-octadecanoyl-sn-glycero-3-phosphate + (9Z)-octadecenoyl-CoA = 1-octadecanoyl-2-(9Z-octadecenoyl)-sn-glycero-3-phosphate + CoA. The enzyme catalyses 1-(9Z-octadecenoyl)-sn-glycero-3-phospho-L-serine + (9Z)-octadecenoyl-CoA = 1,2-di-(9Z)-octadecenoyl-sn-glycero-3-phospho-L-serine + CoA. The catalysed reaction is a 1-acyl-sn-glycero-3-phospho-(1D-myo-inositol) + (9Z)-octadecenoyl-CoA = a 1-acyl-2-(9Z-octadecenoyl)-sn-glycero-3-phospho-(1D-myo-inositol) + CoA. It carries out the reaction 1-heptadecanoyl-sn-glycero-3-phosphate + (9Z)-octadecenoyl-CoA = 1-heptadecanoyl-2-(9Z)-octadecenoyl-sn-glycero-3-phosphate + CoA. It catalyses the reaction 1-heptadecanoyl-sn-glycero-3-phosphate + dodecanoyl-CoA = 1-heptadecanoyl-2-dodecanoyl-sn-glycero-3-phosphate + CoA. The enzyme catalyses 1-heptadecanoyl-sn-glycero-3-phosphate + tetradecanoyl-CoA = 1-heptadecanoyl-2-tetradecanoyl-sn-glycero-3-phosphate + CoA. Its pathway is phospholipid metabolism; CDP-diacylglycerol biosynthesis; CDP-diacylglycerol from sn-glycerol 3-phosphate: step 2/3. Functionally, acyltransferase that catalyzes the sn-2-specific, acyl-CoA-dependent acylation of lysophosphatidic acid (LPA) to phosphatidic acid (PA) in lipid particles. Together with ALE1, plays a central role in PA biosynthesis. PA is the intermediate, from which all glycerophospholipids are synthesized. Can also acylate lysophosphoinositol (LPI) and lysophosphoserine (LPS). The fatty acyl substrates include 18:1-acyl-CoA, 14:0-acyl-CoA, 12:0-acyl-CoA and 10:0-acyl-CoA. In Saccharomyces cerevisiae (strain ATCC 204508 / S288c) (Baker's yeast), this protein is 1-acyl-sn-glycerol-3-phosphate acyltransferase.